The primary structure comprises 616 residues: General alpha-glucoside permease (616 aa).

Residues 1–115 (MKNIISLVSK…AALWSILVST (115 aa)) are Cytoplasmic-facing. The span at 15–27 (SKNEDKNISESSR) shows a compositional bias: basic and acidic residues. Residues 15 to 40 (SKNEDKNISESSRDIVNQQEVFNTED) are disordered. A helical transmembrane segment spans residues 116–136 (TLVMEGYDTALLSALYALPVF). Over 137-160 (QRKFGTLNGEGSYEITSQWQIGLN) the chain is Extracellular. Residues 161-181 (MCVLCGEMIGLQITTYMVEFM) traverse the membrane as a helical segment. Residues 182–191 (GNRYTMITAL) are Cytoplasmic-facing. The chain crosses the membrane as a helical span at residues 192 to 212 (GLLTAYIFILYYCKSLAMIAV). The Extracellular portion of the chain corresponds to 213-214 (GQ). Residues 215 to 235 (ILSAIPWGCFQSLAVTYASEV) traverse the membrane as a helical segment. Topologically, residues 236–242 (CPLALRY) are cytoplasmic. Residues 243–263 (YMTSYSNICWLFGQIFASGIM) traverse the membrane as a helical segment. The Extracellular portion of the chain corresponds to 264 to 278 (KNSQENLGNSDLGYK). A helical membrane pass occupies residues 279–299 (LPFALQWIWPAPLMIGIFFAP). Over 300–373 (ESPWWLVRKD…VNGRRTRLAC (74 aa)) the chain is Cytoplasmic. The helical transmembrane segment at 374 to 394 (LTWVAQNSSGAVLLGYSTYFF) threads the bilayer. Residues 395 to 404 (ERAGMATDKA) are Extracellular-facing. The helical transmembrane segment at 405 to 425 (FTFSLIQYCLGLAGTLCSWVI) threads the bilayer. Residues 426-433 (SGRVGRWT) lie on the Cytoplasmic side of the membrane. A helical membrane pass occupies residues 434 to 454 (ILTYGLAFQMVCLFIIGGMGF). Topologically, residues 455–466 (GSGSSASNGAGG) are extracellular. Residues 467 to 487 (LLLALSFFYNAGIGAVVYCIV) traverse the membrane as a helical segment. The Cytoplasmic segment spans residues 488–504 (AEIPSAELRTKTIVLAR). Residues 505-525 (ICYNLMAVINAILTPYMLNVS) traverse the membrane as a helical segment. Residues 526-532 (DWNWGAK) lie on the Extracellular side of the membrane. Residues 533–553 (TGLYWGGFTAVTLAWVIIDLP) form a helical membrane-spanning segment. The Cytoplasmic segment spans residues 554-616 (ETTGRTFSEI…QRELNAADKC (63 aa)). Positions 587 to 616 (GKTQHDSLADESISQSSSIKQRELNAADKC) are disordered. Basic and acidic residues predominate over residues 606 to 616 (KQRELNAADKC).

This sequence belongs to the major facilitator superfamily. Sugar transporter (TC 2.A.1.1) family.

The protein resides in the cell membrane. Functionally, high-affinity uptake of alpha-glucosides such as maltose, turanose, isomaltose, alpha-methylglucoside, maltotriose, palatinose, trehalose, melezitose and glucose. Acts with the concomitant transport of protons into the cell (symport system). Provides an alternative and minor mechanism for growth on trehalose carbon source by transporting trehalose into the cytoplasm for conversion to glucose by neutral trehalase NTH1. This is General alpha-glucoside permease from Saccharomyces cerevisiae (strain CEN.PK113-7D) (Baker's yeast).